A 527-amino-acid chain; its full sequence is Type-2 serine--tRNA ligase (527 aa).

Position 317 (alanine 317) interacts with L-serine. Cysteine 319 lines the Zn(2+) pocket. L-serine is bound at residue arginine 349. Residues 349-351 (RWE) and 360-361 (RV) each bind ATP. 366 to 368 (RIE) is a binding site for L-serine. 2 residues coordinate Zn(2+): glutamate 368 and cysteine 478. Arginine 485 contributes to the ATP binding site.

It belongs to the class-II aminoacyl-tRNA synthetase family. Type-2 seryl-tRNA synthetase subfamily. As to quaternary structure, homodimer. Zn(2+) is required as a cofactor.

The protein localises to the cytoplasm. The catalysed reaction is tRNA(Ser) + L-serine + ATP = L-seryl-tRNA(Ser) + AMP + diphosphate + H(+). The enzyme catalyses tRNA(Sec) + L-serine + ATP = L-seryl-tRNA(Sec) + AMP + diphosphate + H(+). Its pathway is aminoacyl-tRNA biosynthesis; selenocysteinyl-tRNA(Sec) biosynthesis; L-seryl-tRNA(Sec) from L-serine and tRNA(Sec): step 1/1. In terms of biological role, catalyzes the attachment of serine to tRNA(Ser). Is also able to aminoacylate tRNA(Sec) with serine, to form the misacylated tRNA L-seryl-tRNA(Sec), which will be further converted into selenocysteinyl-tRNA(Sec). This Methanopyrus kandleri (strain AV19 / DSM 6324 / JCM 9639 / NBRC 100938) protein is Type-2 serine--tRNA ligase.